The sequence spans 414 residues: MIOREX complex component 10 (414 aa).

A mitochondrion-targeting transit peptide spans 1 to 29 (MLSFRSLTSTFGFVSRFQIRRLGTSLSIQ). At 30–373 (NLEVQDGRWK…ISLLNERNST (344 aa)) the chain is on the mitochondrial matrix side. Residues 374–394 (FLEWIIIYLIAFELCFEIYHF) form a helical membrane-spanning segment. Over 395–414 (YQKYSSYCSEPTNDDLDATK) the chain is Mitochondrial intermembrane.

The protein belongs to the RMD1/sif2 family. Associates with the mitochondrial ribosome.

It is found in the mitochondrion inner membrane. Its function is as follows. Component of MIOREX complexes, large expressome-like assemblies of ribosomes with factors involved in all the steps of post-transcriptional gene expression. This Saccharomyces cerevisiae (strain ATCC 204508 / S288c) (Baker's yeast) protein is MIOREX complex component 10.